We begin with the raw amino-acid sequence, 407 residues long: Growth/differentiation factor 11 (407 aa).

A signal peptide spans 1–24 (MVLAAPLLLGFLLLALELRPRGEA). Positions 25–298 (AEGPAAAAAA…VLENTKRSRR (274 aa)) are excised as a propeptide. Residue N94 is glycosylated (N-linked (GlcNAc...) asparagine). 4 disulfide bridges follow: C304-C314, C313-C372, C341-C404, and C345-C406.

The protein belongs to the TGF-beta family. As to quaternary structure, homodimer; disulfide-linked. Interacts directly with ACVR2B. Interacts directly with ACVR2A. Interacts with ACVR1B, TGFBR1 and ACVR1C in an ACVR2B-dependent manner. Interacts with FST isoform 2/FS-288. Synthesized as large precursor molecule that undergoes proteolytic cleavage by furin-like proteases. This produces an inactive form consisting of the mature C-terminal portion non-covalently bound to its cleaved N-terminal propeptide. Activation of the mature form requires additional cleavage of the propeptide by a tolloid-like metalloproteinase. As to expression, in the embryo, strong expression is seen in the palatal epithelia, including the medial edge epithelial and midline epithelial seam of the palatal shelves. Less pronounced expression is also seen throughout the palatal shelf and tongue mesenchyme.

It is found in the secreted. Functionally, secreted signal that acts globally to regulate anterior/posterior axial patterning during development. May play critical roles in patterning both mesodermal and neural tissues. It is required for proper vertebral patterning and orofacial development. Signals through activin receptors type-2, ACVR2A and ACVR2B, and activin receptors type-1, ACVR1B, ACVR1C and TGFBR1 leading to the phosphorylation of SMAD2 and SMAD3. This Homo sapiens (Human) protein is Growth/differentiation factor 11 (GDF11).